Reading from the N-terminus, the 198-residue chain is Probable thymidylate kinase (198 aa).

9 to 16 is a binding site for ATP; the sequence is GIDGSGKT.

Belongs to the thymidylate kinase family.

The catalysed reaction is dTMP + ATP = dTDP + ADP. In Methanococcus vannielii (strain ATCC 35089 / DSM 1224 / JCM 13029 / OCM 148 / SB), this protein is Probable thymidylate kinase.